Consider the following 623-residue polypeptide: Glutathione import ATP-binding protein GsiA (623 aa).

ABC transporter domains lie at 15–269 (VENL…RALL) and 314–564 (LRVR…RKLL). ATP contacts are provided by residues 49–56 (GESGSGKS) and 357–364 (GESGSGKS).

This sequence belongs to the ABC transporter superfamily. Glutathione importer (TC 3.A.1.5.11) family. In terms of assembly, the complex is composed of two ATP-binding proteins (GsiA), two transmembrane proteins (GsiC and GsiD) and a solute-binding protein (GsiB).

Its subcellular location is the cell inner membrane. It catalyses the reaction glutathione(out) + ATP + H2O = glutathione(in) + ADP + phosphate + H(+). Its function is as follows. Part of the ABC transporter complex GsiABCD involved in glutathione import. Responsible for energy coupling to the transport system. The chain is Glutathione import ATP-binding protein GsiA from Escherichia coli O1:K1 / APEC.